Consider the following 255-residue polypeptide: Electron transfer flavoprotein subunit beta (255 aa).

An N-acetylalanine modification is found at Ala2. Residues Ala9, 39 to 42, Cys66, and 123 to 134 each bind AMP; these read NPFC and GKQAIDDDCNQT. A recognition loop region spans residues 183–205; that stretch reads ADLRLNEPRYATLPNIMKAKKKK. Lys200 is subject to N6,N6,N6-trimethyllysine; by ETFBKMT; alternate. Position 200 is an N6-acetyllysine; alternate (Lys200). Lys200 carries the N6-methyllysine; alternate modification. The residue at position 203 (Lys203) is an N6,N6,N6-trimethyllysine; by ETFBKMT. Lys210 carries the post-translational modification N6-acetyllysine; alternate. Lys210 carries the N6-succinyllysine; alternate modification. Phosphoserine occurs at positions 223 and 226. At Lys238 the chain carries N6-acetyllysine. Lys248 carries the post-translational modification N6-acetyllysine; alternate. Residue Lys248 is modified to N6-succinyllysine; alternate.

Belongs to the ETF beta-subunit/FixA family. Heterodimer composed of ETFA and ETFB. Identified in a complex that contains ETFA, ETFB and ETFRF1. Interacts with ACADM. Post-translationally, methylated. Trimethylation at Lys-200 and Lys-203 may negatively regulate the activity in electron transfer from acyl-CoA dehydrogenases.

The protein localises to the mitochondrion matrix. Its function is as follows. Heterodimeric electron transfer flavoprotein that accepts electrons from several mitochondrial dehydrogenases, including acyl-CoA dehydrogenases, glutaryl-CoA and sarcosine dehydrogenase. It transfers the electrons to the main mitochondrial respiratory chain via ETF-ubiquinone oxidoreductase. Required for normal mitochondrial fatty acid oxidation and normal amino acid metabolism. ETFB binds an AMP molecule that probably has a purely structural role. The chain is Electron transfer flavoprotein subunit beta from Sus scrofa (Pig).